We begin with the raw amino-acid sequence, 227 residues long: Urease accessory protein UreG (227 aa).

Residues 1 to 10 show a composition bias toward basic and acidic residues; that stretch reads MHLDHAHTHD. The tract at residues 1-22 is disordered; that stretch reads MHLDHAHTHDGPSAVSADAHRP. GTP is bound at residue 35-42; sequence GPVGSGKT.

Belongs to the SIMIBI class G3E GTPase family. UreG subfamily. In terms of assembly, homodimer. UreD, UreF and UreG form a complex that acts as a GTP-hydrolysis-dependent molecular chaperone, activating the urease apoprotein by helping to assemble the nickel containing metallocenter of UreC. The UreE protein probably delivers the nickel.

The protein localises to the cytoplasm. In terms of biological role, facilitates the functional incorporation of the urease nickel metallocenter. This process requires GTP hydrolysis, probably effectuated by UreG. This is Urease accessory protein UreG from Streptomyces avermitilis (strain ATCC 31267 / DSM 46492 / JCM 5070 / NBRC 14893 / NCIMB 12804 / NRRL 8165 / MA-4680).